A 288-amino-acid polypeptide reads, in one-letter code: MAEITAKMVSDLRVATGLGMMECKKALVEAEGDFAKAEEILRIKSGSKASKMAGRLAAEGIIGSYVEGGVGALVEVNCETDFVAKDPTFIALANAAAKAVAIANPADVEALAAVEVDGQQVEEIRKAAIAKLGENMTIRRFVRYQTEGAISTYLHGAKIGVIVDFTGPEQVGKDVAMHVAASKPICVSKDQVSAETLDQERKIYSAQAAESGKPADIVAKMVEGRINKFLAEVTLLGQPFVKNPDVTVEKLLAEQKASVKAFAMFVVGEGIEKKVVDYAAEVAAAAKL.

Positions threonine 80–valine 83 are involved in Mg(2+) ion dislocation from EF-Tu.

Belongs to the EF-Ts family.

It is found in the cytoplasm. Its function is as follows. Associates with the EF-Tu.GDP complex and induces the exchange of GDP to GTP. It remains bound to the aminoacyl-tRNA.EF-Tu.GTP complex up to the GTP hydrolysis stage on the ribosome. The chain is Elongation factor Ts from Chromobacterium violaceum (strain ATCC 12472 / DSM 30191 / JCM 1249 / CCUG 213 / NBRC 12614 / NCIMB 9131 / NCTC 9757 / MK).